Reading from the N-terminus, the 681-residue chain is Envelope glycoprotein (681 aa).

Residues 1–18 (MKTTCLFISLILIQGIKT) form the signal peptide. Residues 19–648 (LPILEIASNN…GLGGKWWTSD (630 aa)) lie on the Extracellular side of the membrane. Residues 38–188 (SGTLQKTEDV…FSRQGQGYRH (151 aa)) form a receptor-binding region. N-linked (GlcNAc...) asparagine; by host glycosylation is found at Asn-94, Asn-171, Asn-190, Asn-202, Asn-207, Asn-219, Asn-223, and Asn-255. The tract at residues 223-351 (NQTCAPSKIP…STNNTSKNNF (129 aa)) is disordered. Low complexity predominate over residues 244–259 (PTSTPTDATTLNTTDP). Residues 277-455 (EPYTTSDAVT…PFLDGLINAP (179 aa)) are mucin-like region. Polar residues-rich tracts occupy residues 278–290 (PYTT…KQGL) and 308–341 (EGNN…TTAI). Asn-310, Asn-323, Asn-326, Asn-337, Asn-344, Asn-345, Asn-350, Asn-360, Asn-389, Asn-397, Asn-408, and Asn-487 each carry an N-linked (GlcNAc...) asparagine; by host glycan. The segment covering 342–351 (STNNTSKNNF) has biased composition (low complexity). A compositionally biased stretch (polar residues) spans 366-414 (TQSTATENEQTSAPSKTTLPPTGNLTTAKSTNNTKGPTTTAPNMTNGHL). Residues 366–425 (TQSTATENEQTSAPSKTTLPPTGNLTTAKSTNNTKGPTTTAPNMTNGHLTSPSPTPNPTT) form a disordered region. Residues 529-549 (GLSWIPFFGPGIEGLYTAGLI) form a fusion peptide region. Asn-564 and Asn-619 each carry an N-linked (GlcNAc...) asparagine; by host glycan. Residues 649–669 (WGVLTNLGILLLLSIAVLIAL) form a helical membrane-spanning segment. Residues 670-681 (SCICRIFTKYIG) lie on the Cytoplasmic side of the membrane. 2 S-palmitoyl cysteine; by host lipidation sites follow: Cys-671 and Cys-673.

The protein belongs to the filoviruses glycoprotein family. As to quaternary structure, homotrimer; each monomer consists of a GP1 and a GP2 subunit linked by disulfide bonds. The resulting peplomers (GP1,2) protrude from the virus surface as spikes. GP1,2 interacts with human CD209 and CLEC4M (collectively referred to as DC-SIGN(R)). Asialoglycoprotein receptor (ASGP-R) may be a liver-specific receptor for GP1,2. Members of the Tyro3 receptor tyrosine kinase family may be cell entry factors interacting with GP1,2. In terms of processing, N-glycosylated. Post-translationally, O-glycosylated in the mucin-like region. Specific enzymatic cleavages in vivo yield mature proteins. The precursor is processed into GP1 and GP2 by host cell furin in the trans Golgi, and maybe by other host proteases, to yield the mature GP1 and GP2 proteins. The cleavage site corresponds to the furin optimal cleavage sequence [KR]-X-[KR]-R. In terms of processing, GP1 is phosphorylated on serine residues between residues 260 and 273.

The protein localises to the virion membrane. It localises to the host cell membrane. Functionally, GP1 is responsible for binding to the receptor(s) on target cells. Interacts with CD209/DC-SIGN and CLEC4M/DC-SIGNR which act as cofactors for virus entry into the host cell. Binding to CD209 and CLEC4M, which are respectively found on dendritic cells (DCs), and on endothelial cells of liver sinusoids and lymph node sinuses, facilitate infection of macrophages and endothelial cells. These interactions not only facilitate virus cell entry, but also allow capture of viral particles by DCs and subsequent transmission to susceptible cells without DCs infection (trans infection). Its function is as follows. GP2 acts as a class I viral fusion protein. Under the current model, the protein has at least 3 conformational states: pre-fusion native state, pre-hairpin intermediate state, and post-fusion hairpin state. During viral and target cell membrane fusion, the coiled coil regions (heptad repeats) assume a trimer-of-hairpins structure, positioning the fusion peptide in close proximity to the C-terminal region of the ectodomain. The formation of this structure appears to drive apposition and subsequent fusion of viral and target cell membranes. Responsible for penetration of the virus into the cell cytoplasm by mediating the fusion of the membrane of the endocytosed virus particle with the endosomal membrane. Low pH in endosomes induces an irreversible conformational change in GP2, releasing the fusion hydrophobic peptide. The chain is Envelope glycoprotein (GP) from Lake Victoria marburgvirus (strain Popp-67) (MARV).